Here is a 390-residue protein sequence, read N- to C-terminus: Enoyl-[acyl-carrier-protein] reductase [NADH], chloroplastic (390 aa).

The transit peptide at 1 to 74 (MAATAASSLQ…CKRPFSFSTR (74 aa)) directs the protein to the chloroplast. 2 residues coordinate NADP(+): Leu-53 and Asn-170. Ser-239 (proton donor) is an active-site residue. The NADP(+) site is built by Lys-282 and Ser-314. Catalysis depends on Lys-282, which acts as the Lowers pKa of active site Tyr.

It belongs to the short-chain dehydrogenases/reductases (SDR) family. FabI subfamily. As to quaternary structure, homotetramer. As to expression, expressed in flowers and siliques and at lower levels in roots and leaves (at protein level).

The protein resides in the plastid. The protein localises to the chloroplast. The catalysed reaction is a 2,3-saturated acyl-[ACP] + NAD(+) = a (2E)-enoyl-[ACP] + NADH + H(+). The protein operates within lipid metabolism; fatty acid biosynthesis. Its activity is regulated as follows. Inhibited by the phytotoxin cyperin and the synthetic antimicrobial compound triclosan. In terms of biological role, catalyzes the NAD-dependent reduction of a carbon-carbon double bond in an enoyl moiety that is covalently linked to an acyl carrier protein (ACP). Catalyzes the last reduction step in the de novo synthesis cycle of fatty acids. Involved in the elongation cycle of fatty acids which are used in lipid metabolism. Required for normal plant growth. The polypeptide is Enoyl-[acyl-carrier-protein] reductase [NADH], chloroplastic (MOD1) (Arabidopsis thaliana (Mouse-ear cress)).